The following is a 500-amino-acid chain: GTPase Der (500 aa).

EngA-type G domains are found at residues 3–166 (PVVA…MEEL) and 211–384 (IKLA…VSAT). GTP contacts are provided by residues 9-16 (GRPNVGKS), 56-60 (DTGGI), 118-121 (NKID), 217-224 (GRPNVGKS), 264-268 (DTAGV), and 329-332 (NKWD). A KH-like domain is found at 385–469 (KRVGTSVLTR…PIRIQFQNSE (85 aa)). A disordered region spans residues 481 to 500 (LSQERQRKRLVGAVKNRNKK). Residues 486 to 500 (QRKRLVGAVKNRNKK) are compositionally biased toward basic residues.

This sequence belongs to the TRAFAC class TrmE-Era-EngA-EngB-Septin-like GTPase superfamily. EngA (Der) GTPase family. In terms of assembly, associates with the 50S ribosomal subunit.

GTPase that plays an essential role in the late steps of ribosome biogenesis. The sequence is that of GTPase Der from Aliivibrio salmonicida (strain LFI1238) (Vibrio salmonicida (strain LFI1238)).